A 1073-amino-acid polypeptide reads, in one-letter code: DNA-directed RNA polymerase subunit beta (1073 aa).

Belongs to the RNA polymerase beta chain family. In terms of assembly, in plastids the minimal PEP RNA polymerase catalytic core is composed of four subunits: alpha, beta, beta', and beta''. When a (nuclear-encoded) sigma factor is associated with the core the holoenzyme is formed, which can initiate transcription.

The protein localises to the plastid. It is found in the chloroplast. The catalysed reaction is RNA(n) + a ribonucleoside 5'-triphosphate = RNA(n+1) + diphosphate. Functionally, DNA-dependent RNA polymerase catalyzes the transcription of DNA into RNA using the four ribonucleoside triphosphates as substrates. This is DNA-directed RNA polymerase subunit beta from Aethionema cordifolium (Lebanon stonecress).